Consider the following 254-residue polypeptide: Galactitol 2-dehydrogenase (L-tagatose-forming) (254 aa).

Residues 21–23 (SGI), Asp-42, 66–67 (DV), Tyr-159, Lys-163, and 192–194 (VAT) each bind NAD(+). The active-site Proton acceptor is Tyr-159. Trp-254 is a binding site for Mg(2+).

It belongs to the short-chain dehydrogenases/reductases (SDR) family. In terms of assembly, homotetramer. It depends on a divalent metal cation as a cofactor.

The enzyme catalyses galactitol + NAD(+) = keto-L-tagatose + NADH + H(+). With respect to regulation, inhibited by the chelating agents EDTA and alpha,alpha'-dipyridyl. Inhibited by Zn(2+) and Fe(2+). In terms of biological role, catalyzes the interconversion of galactitol to the rare sugar L-tagatose. Shows activity with a wide range of substrates, and catalyzes the oxidation of a variety of polyvalent aliphatic alcohols and polyols to the corresponding ketones and ketoses, respectively, and in the reverse reaction, it reduces ketones with high stereoselectivity yielding the corresponding S-configurated alcohols. Shows high activity with D-threitol, xylitol, 1,2-hexanediol, 1,2-pentanediol, 2-hexanol, L-erythrulose, D-ribulose and acetoin. Specific for NAD(+). The chain is Galactitol 2-dehydrogenase (L-tagatose-forming) from Cereibacter sphaeroides (Rhodobacter sphaeroides).